A 275-amino-acid polypeptide reads, in one-letter code: Urease accessory protein UreD (275 aa).

This sequence belongs to the UreD family. UreD, UreF and UreG form a complex that acts as a GTP-hydrolysis-dependent molecular chaperone, activating the urease apoprotein by helping to assemble the nickel containing metallocenter of UreC. The UreE protein probably delivers the nickel.

The protein localises to the cytoplasm. Functionally, required for maturation of urease via the functional incorporation of the urease nickel metallocenter. In Cereibacter sphaeroides (strain ATCC 17023 / DSM 158 / JCM 6121 / CCUG 31486 / LMG 2827 / NBRC 12203 / NCIMB 8253 / ATH 2.4.1.) (Rhodobacter sphaeroides), this protein is Urease accessory protein UreD.